Consider the following 131-residue polypeptide: Probable histone H2A.3 (131 aa).

Residues 1 to 23 (MAGRGKQLGSGAAKKSTSRSSKA) are disordered. The span at 9-23 (GSGAAKKSTSRSSKA) shows a compositional bias: low complexity.

It belongs to the histone H2A family. In terms of assembly, the nucleosome is a histone octamer containing two molecules each of H2A, H2B, H3 and H4 assembled in one H3-H4 heterotetramer and two H2A-H2B heterodimers. The octamer wraps approximately 147 bp of DNA. In terms of processing, not ubiquitinated. As to expression, expressed in meristems and dividing cells.

The protein localises to the nucleus. The protein resides in the chromosome. In terms of biological role, core component of nucleosome. Nucleosomes wrap and compact DNA into chromatin, limiting DNA accessibility to the cellular machineries which require DNA as a template. Histones thereby play a central role in transcription regulation, DNA repair, DNA replication and chromosomal stability. DNA accessibility is regulated via a complex set of post-translational modifications of histones, also called histone code, and nucleosome remodeling. In Arabidopsis thaliana (Mouse-ear cress), this protein is Probable histone H2A.3.